We begin with the raw amino-acid sequence, 905 residues long: Isoleucine--tRNA ligase (905 aa).

The short motif at 56–66 (PYANGNIHMGT) is the 'HIGH' region element. An L-isoleucyl-5'-AMP-binding site is contributed by glutamate 563. Residues 604–608 (KMSKS) carry the 'KMSKS' region motif. Lysine 607 contributes to the ATP binding site.

The protein belongs to the class-I aminoacyl-tRNA synthetase family. IleS type 1 subfamily. In terms of assembly, monomer.

The protein localises to the cytoplasm. The enzyme catalyses tRNA(Ile) + L-isoleucine + ATP = L-isoleucyl-tRNA(Ile) + AMP + diphosphate. Catalyzes the attachment of isoleucine to tRNA(Ile). As IleRS can inadvertently accommodate and process structurally similar amino acids such as valine, to avoid such errors it has two additional distinct tRNA(Ile)-dependent editing activities. One activity is designated as 'pretransfer' editing and involves the hydrolysis of activated Val-AMP. The other activity is designated 'posttransfer' editing and involves deacylation of mischarged Val-tRNA(Ile). The sequence is that of Isoleucine--tRNA ligase from Pelagibacter ubique (strain HTCC1062).